The following is a 229-amino-acid chain: PKHD-type hydroxylase RPD_3334 (229 aa).

Positions 78 to 180 (QIFPPLFNRY…RVASFFWLQS (103 aa)) constitute a Fe2OG dioxygenase domain. Fe cation contacts are provided by histidine 98, aspartate 100, and histidine 161. Arginine 171 serves as a coordination point for 2-oxoglutarate.

Fe(2+) is required as a cofactor. Requires L-ascorbate as cofactor.

The chain is PKHD-type hydroxylase RPD_3334 from Rhodopseudomonas palustris (strain BisB5).